Consider the following 232-residue polypeptide: UPF0502 protein mma_2112 (232 aa).

It belongs to the UPF0502 family.

The polypeptide is UPF0502 protein mma_2112 (Janthinobacterium sp. (strain Marseille) (Minibacterium massiliensis)).